A 137-amino-acid polypeptide reads, in one-letter code: Venom allergen 4 (137 aa).

Residues Met1–Ala19 form the signal peptide.

It belongs to the ant venom allergen 2/4 family. In terms of assembly, monomer. In terms of tissue distribution, expressed by the venom gland.

It is found in the secreted. This chain is Venom allergen 4, found in Solenopsis invicta (Red imported fire ant).